We begin with the raw amino-acid sequence, 64 residues long: Cecropin-A (64 aa).

Residues 1-22 (MNFSRIFFFVFACLTALAMVNA) form the signal peptide. Positions 23-26 (APEP) are cleaved as a propeptide — removed by a dipeptidylpeptidase. Lys-63 is modified (lysine amide).

The protein belongs to the cecropin family. Post-translationally, a protein with the same sequence as cecropin A, but lacking the carboxyl blocking group, has been isolated and called cecropin C.

It localises to the secreted. Its function is as follows. Cecropins have lytic and antibacterial activity against several Gram-positive and Gram-negative bacteria. The polypeptide is Cecropin-A (Hyalophora cecropia (Cecropia moth)).